We begin with the raw amino-acid sequence, 215 residues long: MASERQYSPVDRLLLQADAALRTLLPFSGASSRPSPAIVQAETDLNPEESRHIAGLMRINHTGEVCAQALYQGQALTAKLPEVRSAMEHAADEEIDHLAWCEQRIRELGSHPSVLNPLFYGLSFGVGAVAGLVSDRVSLGFVAATEDQVCKHLDEHLEQIPEHDAKSRAILEQMRIDEEQHANSALAAGGVRFPAPVKFGMTLLSKVMTKSTYRI.

6 residues coordinate Fe cation: glutamate 64, glutamate 94, histidine 97, glutamate 146, glutamate 178, and histidine 181.

It belongs to the COQ7 family. It depends on Fe cation as a cofactor.

It is found in the cell membrane. The catalysed reaction is a 5-methoxy-2-methyl-3-(all-trans-polyprenyl)benzene-1,4-diol + AH2 + O2 = a 3-demethylubiquinol + A + H2O. It participates in cofactor biosynthesis; ubiquinone biosynthesis. Functionally, catalyzes the hydroxylation of 2-nonaprenyl-3-methyl-6-methoxy-1,4-benzoquinol during ubiquinone biosynthesis. The sequence is that of 3-demethoxyubiquinol 3-hydroxylase from Ectopseudomonas mendocina (strain ymp) (Pseudomonas mendocina).